We begin with the raw amino-acid sequence, 397 residues long: Phosphoglycerate kinase (397 aa).

Residues 21–23 (DFN), Arg36, 59–62 (HLGR), Arg118, and Arg151 contribute to the substrate site. ATP-binding positions include Lys202, Gly293, Glu324, and 353–356 (GGDS).

Belongs to the phosphoglycerate kinase family. Monomer.

It localises to the cytoplasm. It carries out the reaction (2R)-3-phosphoglycerate + ATP = (2R)-3-phospho-glyceroyl phosphate + ADP. It functions in the pathway carbohydrate degradation; glycolysis; pyruvate from D-glyceraldehyde 3-phosphate: step 2/5. The sequence is that of Phosphoglycerate kinase from Chloroherpeton thalassium (strain ATCC 35110 / GB-78).